Consider the following 88-residue polypeptide: Synaptonemal complex central element protein 3 (88 aa).

A coiled-coil region spans residues 8-75 (ERSYDNMLKM…FLNCKEEMEK (68 aa)).

As to quaternary structure, homodimer. Can form higher-order homooligomers. Interacts with SYCP1 (via tetrameric core); the interaction remodels SYCP1 homotetramers to 2:1 heterotrimers with SYCE3. SYCP1/SYCE3 heterotrimers form lattice assemblies as part of the mature synaptonemal complex via both lateral and head-to-head interactions. Interacts with the SYCE1-SIX6OS1 complex; the interaction recruits the SYCE1-SIX6OS1 complex to the central element of the synaptonemal complex. Interacts with the SYCE2-TEX12 complex; the interaction promotes fibrous assembly of SYCE2-TEX12 as part of the synaptonemal complex central element. Interacts with SYCE1. Interacts with SYCE2. Interacts with proteasome subunit PSMA8; to participate in meiosis progression during spermatogenesis. Interacts with SPO16. As to expression, expression is restricted to spermatocytes and is absent in spermatogonia, spermatids and spermatogonia (at protein level). Expressed in adult testis and embryonic ovary. Expressed in the convoluted seminiferous tubules in spermatogonia and spermatocytes.

It is found in the nucleus. The protein resides in the chromosome. Its function is as follows. Major component of the transverse central element of synaptonemal complexes (SCS), formed between homologous chromosomes during meiotic prophase. Required for the assembly of the central element of the synaptonemal complex during meiosis, via remodeling of SYCP1 lattice structures and promoting recruitment of SYCE2-TEX12 and SYCE1-SIX60S1 complexes. Required for chromosome loading of the central element-specific SCS proteins, and for initiating synapsis between homologous chromosomes. Chromosome loading appears to require SYCP1. Required for fertility and normal testis development. May play a role in apoptosis of spermatogenic cells and pathogenesis of cryptorchidism. This Mus musculus (Mouse) protein is Synaptonemal complex central element protein 3.